A 340-amino-acid polypeptide reads, in one-letter code: Proline-rich transmembrane protein 2 (340 aa).

A disordered region spans residues 1 to 261; the sequence is MAASSSEISE…AGPGVEGGEG (261 aa). Over 1 to 268 the chain is Cytoplasmic; the sequence is MAASSSEISE…GEGTQKPRDY (268 aa). S28 bears the Phosphoserine mark. The residue at position 74 (T74) is a Phosphothreonine. Pro residues-rich tracts occupy residues 131 to 155 and 197 to 207; these read PPEP…PKPA and APEPHSPPSKK. S238 is subject to Phosphoserine. R240 is modified (omega-N-methylarginine). S248 and S249 each carry phosphoserine. The segment at residues 269-289 is an intramembrane region (helical); sequence IILAILSCFCPMWPVNIVAFA. Residues 290–317 lie on the Cytoplasmic side of the membrane; it reads YAVMSRNSLQQGDVDGAQRLGRVAKLLS. The helical transmembrane segment at 318-338 threads the bilayer; that stretch reads IVALVGGVLIIIASCVINLGV. The Extracellular portion of the chain corresponds to 339-340; the sequence is YK.

This sequence belongs to the CD225/Dispanin family. As to quaternary structure, component of the outer core of AMPAR complex. AMPAR complex consists of an inner core made of 4 pore-forming GluA/GRIA proteins (GRIA1, GRIA2, GRIA3 and GRIA4) and 4 major auxiliary subunits arranged in a twofold symmetry. One of the two pairs of distinct binding sites is occupied either by CNIH2, CNIH3 or CACNG2, CACNG3. The other harbors CACNG2, CACNG3, CACNG4, CACNG8 or GSG1L. This inner core of AMPAR complex is complemented by outer core constituents binding directly to the GluA/GRIA proteins at sites distinct from the interaction sites of the inner core constituents. Outer core constituents include at least PRRT1, PRRT2, CKAMP44/SHISA9, FRRS1L and NRN1. The proteins of the inner and outer core serve as a platform for other, more peripherally associated AMPAR constituents. Alone or in combination, these auxiliary subunits control the gating and pharmacology of the AMPAR complex and profoundly impact their biogenesis and protein processing. Interacts with intersectin 1/ITSN1. Interacts with SNARE complex components, including SNAP25, STX1A, SYT1 and SYT2; this interaction may inhibit SNARE complex formation.

The protein localises to the cell membrane. Its subcellular location is the presynaptic cell membrane. It localises to the synapse. It is found in the cell projection. The protein resides in the axon. The protein localises to the cytoplasmic vesicle. Its subcellular location is the secretory vesicle. It localises to the synaptic vesicle membrane. It is found in the postsynaptic density membrane. The protein resides in the dendritic spine. As a component of the outer core of AMPAR complex, may be involved in synaptic transmission in the central nervous system. In hippocampal neurons, in presynaptic terminals, plays an important role in the final steps of neurotransmitter release, possibly by regulating Ca(2+)-sensing. In the cerebellum, may inhibit SNARE complex formation and down-regulate short-term facilitation. The protein is Proline-rich transmembrane protein 2 (PRRT2) of Pongo abelii (Sumatran orangutan).